We begin with the raw amino-acid sequence, 70 residues long: Large ribosomal subunit protein uL29 (70 aa).

This sequence belongs to the universal ribosomal protein uL29 family.

The sequence is that of Large ribosomal subunit protein uL29 from Gloeobacter violaceus (strain ATCC 29082 / PCC 7421).